Consider the following 130-residue polypeptide: Small ribosomal subunit protein uS11 (130 aa).

The protein belongs to the universal ribosomal protein uS11 family. In terms of assembly, part of the 30S ribosomal subunit. Interacts with proteins S7 and S18. Binds to IF-3.

Located on the platform of the 30S subunit, it bridges several disparate RNA helices of the 16S rRNA. Forms part of the Shine-Dalgarno cleft in the 70S ribosome. This Alkalilimnicola ehrlichii (strain ATCC BAA-1101 / DSM 17681 / MLHE-1) protein is Small ribosomal subunit protein uS11.